The sequence spans 62 residues: Alpha-elapitoxin-Pc1 (62 aa).

Intrachain disulfides connect Cys-3–Cys-24, Cys-17–Cys-41, Cys-43–Cys-54, and Cys-55–Cys-60.

This sequence belongs to the three-finger toxin family. Short-chain subfamily. Type I alpha-neurotoxin sub-subfamily. In terms of tissue distribution, expressed by the venom gland.

The protein resides in the secreted. Bird-specific neurotoxin (tested on chicken) that acts as pseudo-irreversible antagonists at the nicotinic acetylcholine receptor (nAChR) of the skeletal neuromuscular junction. Has no significant effect on the electrically-induced twitches of the rat isolated phrenic nerve-diaphragm preparation. This chain is Alpha-elapitoxin-Pc1, found in Pseudechis colletti (Collett's snake).